Here is a 197-residue protein sequence, read N- to C-terminus: Imidazoleglycerol-phosphate dehydratase (197 aa).

It belongs to the imidazoleglycerol-phosphate dehydratase family.

It is found in the cytoplasm. The enzyme catalyses D-erythro-1-(imidazol-4-yl)glycerol 3-phosphate = 3-(imidazol-4-yl)-2-oxopropyl phosphate + H2O. Its pathway is amino-acid biosynthesis; L-histidine biosynthesis; L-histidine from 5-phospho-alpha-D-ribose 1-diphosphate: step 6/9. The polypeptide is Imidazoleglycerol-phosphate dehydratase (Marinomonas sp. (strain MWYL1)).